The following is a 145-amino-acid chain: D-aminoacyl-tRNA deacylase (145 aa).

A Gly-cisPro motif, important for rejection of L-amino acids motif is present at residues 137–138; that stretch reads GP.

Belongs to the DTD family. In terms of assembly, homodimer.

The protein localises to the cytoplasm. The enzyme catalyses glycyl-tRNA(Ala) + H2O = tRNA(Ala) + glycine + H(+). The catalysed reaction is a D-aminoacyl-tRNA + H2O = a tRNA + a D-alpha-amino acid + H(+). Functionally, an aminoacyl-tRNA editing enzyme that deacylates mischarged D-aminoacyl-tRNAs. Also deacylates mischarged glycyl-tRNA(Ala), protecting cells against glycine mischarging by AlaRS. Acts via tRNA-based rather than protein-based catalysis; rejects L-amino acids rather than detecting D-amino acids in the active site. By recycling D-aminoacyl-tRNA to D-amino acids and free tRNA molecules, this enzyme counteracts the toxicity associated with the formation of D-aminoacyl-tRNA entities in vivo and helps enforce protein L-homochirality. This Citrobacter koseri (strain ATCC BAA-895 / CDC 4225-83 / SGSC4696) protein is D-aminoacyl-tRNA deacylase.